Reading from the N-terminus, the 81-residue chain is ATP synthase subunit c, chloroplastic (81 aa).

A run of 2 helical transmembrane segments spans residues Pro3 to Gly23 and Leu57 to Ala77.

The protein belongs to the ATPase C chain family. F-type ATPases have 2 components, F(1) - the catalytic core - and F(0) - the membrane proton channel. F(1) has five subunits: alpha(3), beta(3), gamma(1), delta(1), epsilon(1). F(0) has four main subunits: a(1), b(1), b'(1) and c(10-14). The alpha and beta chains form an alternating ring which encloses part of the gamma chain. F(1) is attached to F(0) by a central stalk formed by the gamma and epsilon chains, while a peripheral stalk is formed by the delta, b and b' chains.

It is found in the plastid. It localises to the chloroplast thylakoid membrane. Functionally, f(1)F(0) ATP synthase produces ATP from ADP in the presence of a proton or sodium gradient. F-type ATPases consist of two structural domains, F(1) containing the extramembraneous catalytic core and F(0) containing the membrane proton channel, linked together by a central stalk and a peripheral stalk. During catalysis, ATP synthesis in the catalytic domain of F(1) is coupled via a rotary mechanism of the central stalk subunits to proton translocation. Key component of the F(0) channel; it plays a direct role in translocation across the membrane. A homomeric c-ring of between 10-14 subunits forms the central stalk rotor element with the F(1) delta and epsilon subunits. This Phaseolus vulgaris (Kidney bean) protein is ATP synthase subunit c, chloroplastic.